The sequence spans 90 residues: Arminin 45266 (90 aa).

The first 20 residues, 1 to 20 (MKSASLILFVALVALTYARS), serve as a signal peptide directing secretion. A propeptide spanning residues 21 to 59 (YEDVKEEIKNEVEKEILDDLEEENDELDDNTQEVNDPRA) is cleaved from the precursor. Residue threonine 87 is modified to Threonine amide.

The protein belongs to the arminin family. In terms of tissue distribution, expressed in entodermal epithelium along the body column.

The protein resides in the secreted. It localises to the target cell membrane. Antimicrobial peptide with a broad-spectrum antimicrobial activity. Keeps its antibacterial activity under a wide range of salt concentrations that mimic physiological conditions of human blood, which is surprising, since Hydra is an obligate freshwater animal with nearly no salt tolerance. Does not affect red blood cells. This Hydra vulgaris (Hydra) protein is Arminin 45266.